Consider the following 275-residue polypeptide: NH(3)-dependent NAD(+) synthetase (275 aa).

50–57 (GISGGVDS) lines the ATP pocket. Asp-56 provides a ligand contact to Mg(2+). Arg-147 contributes to the deamido-NAD(+) binding site. ATP is bound at residue Thr-167. Glu-172 contributes to the Mg(2+) binding site. Residues Lys-180 and Asp-187 each coordinate deamido-NAD(+). Positions 196 and 218 each coordinate ATP. 267-268 (HK) serves as a coordination point for deamido-NAD(+).

This sequence belongs to the NAD synthetase family. In terms of assembly, homodimer.

The enzyme catalyses deamido-NAD(+) + NH4(+) + ATP = AMP + diphosphate + NAD(+) + H(+). It functions in the pathway cofactor biosynthesis; NAD(+) biosynthesis; NAD(+) from deamido-NAD(+) (ammonia route): step 1/1. Catalyzes the ATP-dependent amidation of deamido-NAD to form NAD. Uses ammonia as a nitrogen source. This Stutzerimonas stutzeri (strain A1501) (Pseudomonas stutzeri) protein is NH(3)-dependent NAD(+) synthetase.